The chain runs to 262 residues: Purine nucleoside phosphorylase SSP1584 (262 aa).

Positions 79, 124, and 141 each coordinate Zn(2+).

The protein belongs to the purine nucleoside phosphorylase YfiH/LACC1 family. Homodimer. Cu(2+) is required as a cofactor. Requires Zn(2+) as cofactor.

It carries out the reaction adenosine + phosphate = alpha-D-ribose 1-phosphate + adenine. The enzyme catalyses S-methyl-5'-thioadenosine + phosphate = 5-(methylsulfanyl)-alpha-D-ribose 1-phosphate + adenine. It catalyses the reaction inosine + phosphate = alpha-D-ribose 1-phosphate + hypoxanthine. The catalysed reaction is adenosine + H2O + H(+) = inosine + NH4(+). Purine nucleoside enzyme that catalyzes the phosphorolysis of adenosine and inosine nucleosides, yielding D-ribose 1-phosphate and the respective free bases, adenine and hypoxanthine. Also catalyzes the phosphorolysis of S-methyl-5'-thioadenosine into adenine and S-methyl-5-thio-alpha-D-ribose 1-phosphate. Also has adenosine deaminase activity. The protein is Purine nucleoside phosphorylase SSP1584 of Staphylococcus saprophyticus subsp. saprophyticus (strain ATCC 15305 / DSM 20229 / NCIMB 8711 / NCTC 7292 / S-41).